The sequence spans 334 residues: Leucine-rich repeat-containing protein 39 (334 aa).

LRR repeat units follow at residues 59 to 82 (EDGR…LLKL), 83 to 105 (NQLQ…IGRF), 106 to 128 (QHLI…IGLL), 129 to 151 (TRLQ…LSNC), 153 to 175 (SLEK…LSKL), 176 to 198 (LKLT…VLDM), 199 to 221 (PALE…LDRM), 223 to 244 (SLHT…IRNM), 245 to 269 (KNLG…EMTS), and 272 to 295 (FVNF…VDGE).

Interacts with MYH7 (via C-terminus). In terms of tissue distribution, expressed in heart and skeletal muscle (at protein level). Also detected in kidney (at protein level). Not detected in other tissues tested (at protein level).

The protein localises to the cytoplasm. Its subcellular location is the myofibril. It localises to the sarcomere. It is found in the m line. Its function is as follows. Component of the sarcomeric M-band which plays a role in myocyte response to biomechanical stress. May regulate expression of other M-band proteins via an SRF-dependent pathway. Important for normal contractile function in heart. This Rattus norvegicus (Rat) protein is Leucine-rich repeat-containing protein 39.